The following is a 416-amino-acid chain: Imidazolonepropionase (416 aa).

The Fe(3+) site is built by His-81 and His-83. Zn(2+) contacts are provided by His-81 and His-83. The 4-imidazolone-5-propanoate site is built by Arg-90, Tyr-153, and His-186. An N-formimidoyl-L-glutamate-binding site is contributed by Tyr-153. His-251 provides a ligand contact to Fe(3+). Residue His-251 coordinates Zn(2+). Gln-254 provides a ligand contact to 4-imidazolone-5-propanoate. Asp-326 is a Fe(3+) binding site. Position 326 (Asp-326) interacts with Zn(2+). Residues Asn-328 and Gly-330 each contribute to the N-formimidoyl-L-glutamate site. 4-imidazolone-5-propanoate is bound at residue Thr-331.

It belongs to the metallo-dependent hydrolases superfamily. HutI family. Zn(2+) is required as a cofactor. Requires Fe(3+) as cofactor.

The protein localises to the cytoplasm. It carries out the reaction 4-imidazolone-5-propanoate + H2O = N-formimidoyl-L-glutamate. The protein operates within amino-acid degradation; L-histidine degradation into L-glutamate; N-formimidoyl-L-glutamate from L-histidine: step 3/3. Functionally, catalyzes the hydrolytic cleavage of the carbon-nitrogen bond in imidazolone-5-propanoate to yield N-formimidoyl-L-glutamate. It is the third step in the universal histidine degradation pathway. This is Imidazolonepropionase from Paracidovorax citrulli (strain AAC00-1) (Acidovorax citrulli).